The chain runs to 247 residues: Putative urease accessory protein UreD homolog (247 aa).

Belongs to the UreD family. As to quaternary structure, ureD, UreF and UreG form a complex that acts as a GTP-hydrolysis-dependent molecular chaperone, activating the urease apoprotein by helping to assemble the nickel containing metallocenter of UreC. The UreE protein probably delivers the nickel.

It is found in the cytoplasm. Functionally, required for maturation of urease via the functional incorporation of the urease nickel metallocenter. The polypeptide is Putative urease accessory protein UreD homolog (Escherichia coli O157:H7).